We begin with the raw amino-acid sequence, 408 residues long: MLFRKRKPKSDDEVITFDELTRFPMTFYKTIGEDLYSDRDPNVIRRYLLRFYLVLGFLNFNAYVVGEIAYFIVHIMSTTTLLEATAVAPCIGFSFMADFKQFGLTVNRKRLVRLLDDLKEIFPLDLEAQRKYNVSFYRKHMNRVMTLFTILCMTYTSSFSFYPAIKSTIKYYLMGSEIFERNYGFHILFPYDAETDLTVYWFSYWGLAHCAYVAGVSYVCVDLLLIATITQLTMHFNFIANDLEAYEGGDHTDEENIKYLHNLVVYHARALDLSEEVNNIFSFLILWNFIAASLVICFAGFQITASNVEDIVLYFIFFSASLVQVFVVCYYGDEMISSSSRIGHSAFNQNWLPCSTKYKRILQFIIARSQKPASIRPPTFPPISFNTFMKVISMSYQFFALLRTTYYG.

Residues 1–52 (MLFRKRKPKSDDEVITFDELTRFPMTFYKTIGEDLYSDRDPNVIRRYLLRFY) lie on the Cytoplasmic side of the membrane. A helical transmembrane segment spans residues 53–73 (LVLGFLNFNAYVVGEIAYFIV). Residue His74 is a topological domain, extracellular. The chain crosses the membrane as a helical span at residues 75 to 95 (IMSTTTLLEATAVAPCIGFSF). The Cytoplasmic segment spans residues 96–144 (MADFKQFGLTVNRKRLVRLLDDLKEIFPLDLEAQRKYNVSFYRKHMNRV). The chain crosses the membrane as a helical span at residues 145–165 (MTLFTILCMTYTSSFSFYPAI). Residues 166–209 (KSTIKYYLMGSEIFERNYGFHILFPYDAETDLTVYWFSYWGLAH) lie on the Extracellular side of the membrane. The helical transmembrane segment at 210 to 230 (CAYVAGVSYVCVDLLLIATIT) threads the bilayer. The Cytoplasmic portion of the chain corresponds to 231–276 (QLTMHFNFIANDLEAYEGGDHTDEENIKYLHNLVVYHARALDLSEE). The helical transmembrane segment at 277 to 301 (VNNIFSFLILWNFIAASLVICFAGF) threads the bilayer. At 302–310 (QITASNVED) the chain is on the extracellular side. A helical transmembrane segment spans residues 311–331 (IVLYFIFFSASLVQVFVVCYY). The Cytoplasmic segment spans residues 332 to 378 (GDEMISSSSRIGHSAFNQNWLPCSTKYKRILQFIIARSQKPASIRPP). A helical membrane pass occupies residues 379–399 (TFPPISFNTFMKVISMSYQFF). Over 400-408 (ALLRTTYYG) the chain is Extracellular.

This sequence belongs to the insect chemoreceptor superfamily. Heteromeric odorant receptor channel (TC 1.A.69) family. Or49a subfamily. In terms of assembly, interacts with Orco. Complexes exist early in the endomembrane system in olfactory sensory neurons (OSNs), coupling these complexes to the conserved ciliary trafficking pathway.

Its subcellular location is the cell membrane. Its function is as follows. Odorant receptor which mediates acceptance or avoidance behavior, depending on its substrates. The odorant receptor repertoire encodes a large collection of odor stimuli that vary widely in identity, intensity, and duration. May form a complex with Orco to form odorant-sensing units, providing sensitive and prolonged odorant signaling and calcium permeability. The chain is Putative odorant receptor 92a (Or92a) from Drosophila melanogaster (Fruit fly).